Reading from the N-terminus, the 712-residue chain is Matrix metalloproteinase-9 (712 aa).

Residues 1–19 form the signal peptide; sequence MSPLQPLVLALLVLACCSA. The propeptide at 20-106 is activation peptide; that stretch reads VPRRRQPTVV…PRCGVPDVGR (87 aa). A glycan (N-linked (GlcNAc...) asparagine) is linked at N38. Positions 97–104 match the Cysteine switch motif; sequence PRCGVPDV. A Zn(2+)-binding site is contributed by C99. 2 N-linked (GlcNAc...) asparagine glycosylation sites follow: N120 and N127. Ca(2+) contacts are provided by D131 and D165. Positions 175 and 177 each coordinate Zn(2+). Positions 182, 183, 185, and 187 each coordinate Ca(2+). Residue H190 coordinates Zn(2+). Residues G197, Q199, and D201 each contribute to the Ca(2+) site. H203 contacts Zn(2+). D205, D206, and E208 together coordinate Ca(2+). 3 Fibronectin type-II domains span residues 225-273, 283-331, and 342-390; these read AKGA…FCPS, ADGK…FCPT, and AAGE…FCPD. Intrachain disulfides connect C230-C256, C244-C271, C288-C314, C302-C329, C347-C373, and C361-C388. H401 is a Zn(2+) binding site. E402 is an active-site residue. The Zn(2+) site is built by H405 and H411. The segment at 440–519 is disordered; it reads QHLYGPRPEP…PTESPDPAED (80 aa). Low complexity predominate over residues 455 to 465; sequence TTTTTTTTEPQ. Over residues 491–504 the composition is skewed to pro residues; it reads TGPPAAGPTGPPTA. Residues 505–514 show a composition bias toward low complexity; that stretch reads GPSAAPTESP. The cysteines at positions 521 and 709 are disulfide-linked. Hemopexin repeat units lie at residues 523–568, 569–613, 615–662, and 663–709; these read VDIF…WPAL, PRKL…GLGP, VAQV…FPGV, and PIST…LLKC.

It belongs to the peptidase M10A family. In terms of assembly, exists as monomer or homodimer; disulfide-linked. Also exists as heterodimer with LCN2. Macrophages and transformed cell lines produce only the monomeric form. Interacts with ECM1. It depends on Zn(2+) as a cofactor. Requires Ca(2+) as cofactor. In terms of processing, N- and O-glycosylated.

It localises to the secreted. The protein resides in the extracellular space. Its subcellular location is the extracellular matrix. It carries out the reaction Cleavage of gelatin types I and V and collagen types IV and V.. Matrix metalloproteinase that plays an essential role in local proteolysis of the extracellular matrix and in leukocyte migration. Could play a role in bone osteoclastic resorption. Cleaves KiSS1 at a Gly-|-Leu bond. Cleaves NINJ1 to generate the Secreted ninjurin-1 form. Cleaves type IV and type V collagen into large C-terminal three quarter fragments and shorter N-terminal one quarter fragments. Degrades fibronectin but not laminin or Pz-peptide. In Bos taurus (Bovine), this protein is Matrix metalloproteinase-9.